The following is a 129-amino-acid chain: Large-conductance mechanosensitive channel (129 aa).

A run of 3 helical transmembrane segments spans residues 14 to 34 (IIDL…VTSL), 38 to 58 (IIMP…SFVY), and 67 to 87 (LGVF…IFMA).

The protein belongs to the MscL family. In terms of assembly, homopentamer.

It is found in the cell membrane. Its function is as follows. Channel that opens in response to stretch forces in the membrane lipid bilayer. May participate in the regulation of osmotic pressure changes within the cell. In Lysinibacillus sphaericus (strain C3-41), this protein is Large-conductance mechanosensitive channel.